Consider the following 285-residue polypeptide: MTLSKAKAFWQLTRMNRPIGSLLLLWPTLWALFLAADGIPDWHVLIVFILGVVFMRSAGCVINDFADRKVDGHVKRTANRPLPSGLVSSKEALILFSVLVTCSFILVLTMNTLTIMLSSIGVLLAIAYPFMKRITYLPQFVLGLAFSWAIPMAYAAESNQVPPEAWLLFVINAVWTIAYDTQYAMVDRDDDLNIGIKSTAILFGRFDKLMIGLLQLTVLTLLIALGIQLSLPSLYNWGVLAAAGCFVYQQWLIKGREREACFEAFLNNNYVGGFIFVAISASVLI.

The next 7 membrane-spanning stretches (helical) occupy residues 33–53 (FLAA…LGVV), 93–113 (LILF…MNTL), 134–154 (ITYL…PMAY), 166–186 (WLLF…YAMV), 209–229 (LMIG…GIQL), 233–253 (SLYN…QWLI), and 265–285 (FLNN…SVLI).

Belongs to the UbiA prenyltransferase family. Mg(2+) serves as cofactor.

Its subcellular location is the cell inner membrane. It catalyses the reaction all-trans-octaprenyl diphosphate + 4-hydroxybenzoate = 4-hydroxy-3-(all-trans-octaprenyl)benzoate + diphosphate. Its pathway is cofactor biosynthesis; ubiquinone biosynthesis. Its function is as follows. Catalyzes the prenylation of para-hydroxybenzoate (PHB) with an all-trans polyprenyl group. Mediates the second step in the final reaction sequence of ubiquinone-8 (UQ-8) biosynthesis, which is the condensation of the polyisoprenoid side chain with PHB, generating the first membrane-bound Q intermediate 3-octaprenyl-4-hydroxybenzoate. The chain is 4-hydroxybenzoate octaprenyltransferase from Aliivibrio salmonicida (strain LFI1238) (Vibrio salmonicida (strain LFI1238)).